The following is a 321-amino-acid chain: Cytochrome c biogenesis protein CcsA (321 aa).

A run of 7 helical transmembrane segments spans residues 17-37, 43-63, 71-91, 143-163, 225-245, 258-273, and 286-306; these read IISI…IVGL, KGMI…WIYS, LYES…VPKI, MLLS…LLVI, VISL…VWAN, ETWA…IYLH, and AIVA…VNLL.

The protein belongs to the CcmF/CycK/Ccl1/NrfE/CcsA family. As to quaternary structure, may interact with Ccs1.

The protein localises to the plastid. It localises to the chloroplast thylakoid membrane. Functionally, required during biogenesis of c-type cytochromes (cytochrome c6 and cytochrome f) at the step of heme attachment. The polypeptide is Cytochrome c biogenesis protein CcsA (Liriodendron tulipifera (Tuliptree)).